Reading from the N-terminus, the 313-residue chain is Protein PALE CRESS, chloroplastic (313 aa).

The transit peptide at 1 to 22 (MAATSLVLTCASPLFSSPRVIS) directs the protein to the chloroplast.

Expressed in green tissues, including leaves. Accumulates in chloroplasts of mature stomatal guard cells.

The protein resides in the plastid. Its subcellular location is the chloroplast. It is found in the chromoplast. It localises to the etioplast. The protein localises to the amyloplast. Functionally, required for the differentiation of chloroplast from proplastids or etioplasts, probably by modulating some chloroplast-encoded genes expression and mRNA maturation. Involved in leaf-cells differentiation. This chain is Protein PALE CRESS, chloroplastic (PAC), found in Arabidopsis thaliana (Mouse-ear cress).